We begin with the raw amino-acid sequence, 247 residues long: ATP synthase subunit a, chloroplastic (247 aa).

Helical transmembrane passes span 38-58 (QVLI…TLAV), 95-115 (VPFI…GALL), 134-154 (INTT…AGLS), 199-219 (LVVV…VMFL), and 220-240 (GLFT…AYIG).

This sequence belongs to the ATPase A chain family. As to quaternary structure, F-type ATPases have 2 components, CF(1) - the catalytic core - and CF(0) - the membrane proton channel. CF(1) has five subunits: alpha(3), beta(3), gamma(1), delta(1), epsilon(1). CF(0) has four main subunits: a, b, b' and c.

Its subcellular location is the plastid. The protein localises to the chloroplast thylakoid membrane. In terms of biological role, key component of the proton channel; it plays a direct role in the translocation of protons across the membrane. This chain is ATP synthase subunit a, chloroplastic, found in Lactuca sativa (Garden lettuce).